The sequence spans 567 residues: Dynein, 70 kDa intermediate chain, flagellar outer arm (567 aa).

4 WD repeats span residues 214–254 (VPTS…GPVE), 261–302 (SHRD…ECVE), 360–399 (GHHG…KTPI), and 404–444 (YHPT…NEPT).

Belongs to the dynein intermediate chain family. In terms of assembly, consists of at least 3 heavy chains (alpha, beta and gamma), 2 intermediate chains and 8 light chains.

The protein localises to the cytoplasm. It is found in the cytoskeleton. The protein resides in the flagellum axoneme. Functionally, may play a role in regulating dynein heavy chain (DHC) activity. May function in holding IC78 to the DHC, or in stabilizing the entire dynein complex. This Chlamydomonas reinhardtii (Chlamydomonas smithii) protein is Dynein, 70 kDa intermediate chain, flagellar outer arm (ODA6).